The chain runs to 2290 residues: Protein Ycf2 (2290 aa).

1644–1651 (GSIGTGRS) lines the ATP pocket.

The protein belongs to the Ycf2 family.

It is found in the plastid. The protein resides in the chloroplast stroma. Its function is as follows. Probable ATPase of unknown function. Its presence in a non-photosynthetic plant (Epifagus virginiana) and experiments in tobacco indicate that it has an essential function which is probably not related to photosynthesis. The chain is Protein Ycf2 from Barbarea verna (Land cress).